Reading from the N-terminus, the 176-residue chain is MTETAGELDPEVTPLHLRKALGRFASGVTIVTTAECEDEDSVHGMTANAFTSVSLDPPLVLVSISTRAKMDTKIRETGTYGISILAGDQEPVSLHFAGAAHEPDRVRFVWRRGVPLLEGALVHLACTVVASHPAGDHTLHVGRVEQLWYDDGHPLVFYTGSFRSLELLGRDEPWGF.

FAD is bound by residues 39-46 (EDSVHGMT) and 48-49 (NA). Residue Ser-52 participates in NAD(+) binding. FAD is bound by residues 63 to 65 (SIS), 69 to 70 (KM), and 95 to 96 (HF). Residues His-137 and 157-160 (FYTG) each bind NAD(+).

Belongs to the non-flavoprotein flavin reductase family. Homodimer. 4-nitrophenol 2-monooxygenase complex consists of an oxygenase component NphA1 and a flavin reductase component NphA2.

The catalysed reaction is a reduced flavin + NAD(+) = an oxidized flavin + NADH + 2 H(+). Catalyzes the reduction of FAD with the concomitant oxidation of NADH. NAD is the physiological electron donor. Subsequently, the reduced flavins diffuse to the oxygenase component NphA2. The polypeptide is NADH-dependent flavin reductase (nphA2) (Rhodococcus sp).